We begin with the raw amino-acid sequence, 353 residues long: Photosystem II D2 protein (353 aa).

Position 2 is an N-acetylthreonine (Thr2). Thr2 bears the Phosphothreonine mark. The helical transmembrane segment at 41–61 threads the bilayer; that stretch reads CAYFALGGWFTGTTFVTSWYT. His118 contributes to the chlorophyll a binding site. A helical transmembrane segment spans residues 125–141; the sequence is GFMLRQFELARSVQLRP. Pheophytin a is bound by residues Gln130 and Asn143. The helical transmembrane segment at 153 to 166 threads the bilayer; the sequence is VFVSVFLIYPLGQS. His198 is a binding site for chlorophyll a. Residues 208–228 traverse the membrane as a helical segment; the sequence is AALLCAIHGATVENTLFEDGD. 2 residues coordinate a plastoquinone: His215 and Phe262. A Fe cation-binding site is contributed by His215. Fe cation is bound at residue His269. Residues 279–295 traverse the membrane as a helical segment; it reads GLWMSALGVVGLALNLR.

The protein belongs to the reaction center PufL/M/PsbA/D family. In terms of assembly, PSII is composed of 1 copy each of membrane proteins PsbA, PsbB, PsbC, PsbD, PsbE, PsbF, PsbH, PsbI, PsbJ, PsbK, PsbL, PsbM, PsbT, PsbX, PsbY, PsbZ, Psb30/Ycf12, at least 3 peripheral proteins of the oxygen-evolving complex and a large number of cofactors. It forms dimeric complexes. It depends on The D1/D2 heterodimer binds P680, chlorophylls that are the primary electron donor of PSII, and subsequent electron acceptors. It shares a non-heme iron and each subunit binds pheophytin, quinone, additional chlorophylls, carotenoids and lipids. There is also a Cl(-1) ion associated with D1 and D2, which is required for oxygen evolution. The PSII complex binds additional chlorophylls, carotenoids and specific lipids. as a cofactor.

The protein resides in the plastid. Its subcellular location is the chloroplast thylakoid membrane. It carries out the reaction 2 a plastoquinone + 4 hnu + 2 H2O = 2 a plastoquinol + O2. In terms of biological role, photosystem II (PSII) is a light-driven water:plastoquinone oxidoreductase that uses light energy to abstract electrons from H(2)O, generating O(2) and a proton gradient subsequently used for ATP formation. It consists of a core antenna complex that captures photons, and an electron transfer chain that converts photonic excitation into a charge separation. The D1/D2 (PsbA/PsbD) reaction center heterodimer binds P680, the primary electron donor of PSII as well as several subsequent electron acceptors. D2 is needed for assembly of a stable PSII complex. In Citrus sinensis (Sweet orange), this protein is Photosystem II D2 protein.